The following is a 251-amino-acid chain: Imidazole glycerol phosphate synthase subunit HisF (251 aa).

Residues D11 and D130 contribute to the active site.

Belongs to the HisA/HisF family. Heterodimer of HisH and HisF.

The protein localises to the cytoplasm. The enzyme catalyses 5-[(5-phospho-1-deoxy-D-ribulos-1-ylimino)methylamino]-1-(5-phospho-beta-D-ribosyl)imidazole-4-carboxamide + L-glutamine = D-erythro-1-(imidazol-4-yl)glycerol 3-phosphate + 5-amino-1-(5-phospho-beta-D-ribosyl)imidazole-4-carboxamide + L-glutamate + H(+). Its pathway is amino-acid biosynthesis; L-histidine biosynthesis; L-histidine from 5-phospho-alpha-D-ribose 1-diphosphate: step 5/9. In terms of biological role, IGPS catalyzes the conversion of PRFAR and glutamine to IGP, AICAR and glutamate. The HisF subunit catalyzes the cyclization activity that produces IGP and AICAR from PRFAR using the ammonia provided by the HisH subunit. This chain is Imidazole glycerol phosphate synthase subunit HisF, found in Bacteroides thetaiotaomicron (strain ATCC 29148 / DSM 2079 / JCM 5827 / CCUG 10774 / NCTC 10582 / VPI-5482 / E50).